Here is a 441-residue protein sequence, read N- to C-terminus: Glutamate--tRNA ligase 2 (441 aa).

The short motif at 9 to 19 (PSPTGYIHVGN) is the 'HIGH' region element. Residues 239-243 (ALSKR) carry the 'KMSKS' region motif. K242 is a binding site for ATP.

The protein belongs to the class-I aminoacyl-tRNA synthetase family. Glutamate--tRNA ligase type 1 subfamily. In terms of assembly, monomer.

It is found in the cytoplasm. It carries out the reaction tRNA(Glu) + L-glutamate + ATP = L-glutamyl-tRNA(Glu) + AMP + diphosphate. In terms of biological role, catalyzes the attachment of glutamate to tRNA(Glu) in a two-step reaction: glutamate is first activated by ATP to form Glu-AMP and then transferred to the acceptor end of tRNA(Glu). This chain is Glutamate--tRNA ligase 2, found in Cereibacter sphaeroides (strain ATCC 17029 / ATH 2.4.9) (Rhodobacter sphaeroides).